The primary structure comprises 147 residues: Ribosome-binding factor A (147 aa).

The disordered stretch occupies residues 126–147; sequence LKKNAQPAGDAHPYKDDDAMND. Over residues 137 to 147 the composition is skewed to basic and acidic residues; the sequence is HPYKDDDAMND.

The protein belongs to the RbfA family. Monomer. Binds 30S ribosomal subunits, but not 50S ribosomal subunits or 70S ribosomes.

It is found in the cytoplasm. Functionally, one of several proteins that assist in the late maturation steps of the functional core of the 30S ribosomal subunit. Associates with free 30S ribosomal subunits (but not with 30S subunits that are part of 70S ribosomes or polysomes). Required for efficient processing of 16S rRNA. May interact with the 5'-terminal helix region of 16S rRNA. The chain is Ribosome-binding factor A from Corynebacterium diphtheriae (strain ATCC 700971 / NCTC 13129 / Biotype gravis).